Reading from the N-terminus, the 182-residue chain is Peptidyl-tRNA hydrolase (182 aa).

Tyr14 serves as a coordination point for tRNA. The Proton acceptor role is filled by His19. Phe64, Asn66, and Asn112 together coordinate tRNA.

The protein belongs to the PTH family. As to quaternary structure, monomer.

It is found in the cytoplasm. The catalysed reaction is an N-acyl-L-alpha-aminoacyl-tRNA + H2O = an N-acyl-L-amino acid + a tRNA + H(+). Functionally, hydrolyzes ribosome-free peptidyl-tRNAs (with 1 or more amino acids incorporated), which drop off the ribosome during protein synthesis, or as a result of ribosome stalling. Its function is as follows. Catalyzes the release of premature peptidyl moieties from peptidyl-tRNA molecules trapped in stalled 50S ribosomal subunits, and thus maintains levels of free tRNAs and 50S ribosomes. The polypeptide is Peptidyl-tRNA hydrolase (Wolbachia sp. subsp. Brugia malayi (strain TRS)).